The primary structure comprises 37 residues: uncharacterized protein (37 aa).

This is an uncharacterized protein from Saccharomyces cerevisiae (strain ATCC 204508 / S288c) (Baker's yeast).